Here is a 58-residue protein sequence, read N- to C-terminus: Large ribosomal subunit protein uL30 (58 aa).

It belongs to the universal ribosomal protein uL30 family. Part of the 50S ribosomal subunit.

The polypeptide is Large ribosomal subunit protein uL30 (Phocaeicola vulgatus (strain ATCC 8482 / DSM 1447 / JCM 5826 / CCUG 4940 / NBRC 14291 / NCTC 11154) (Bacteroides vulgatus)).